Reading from the N-terminus, the 232-residue chain is Ribonuclease 3 (232 aa).

An RNase III domain is found at 6–133 (FNDIENRLGV…VIAAVYLDKG (128 aa)). Position 46 (E46) interacts with Mg(2+). D50 is a catalytic residue. Residues D119 and E122 each coordinate Mg(2+). Residue E122 is part of the active site. Residues 160 to 229 (DFKTKLQELL…AKEALKRLEK (70 aa)) enclose the DRBM domain.

It belongs to the ribonuclease III family. As to quaternary structure, homodimer. Requires Mg(2+) as cofactor.

The protein localises to the cytoplasm. The enzyme catalyses Endonucleolytic cleavage to 5'-phosphomonoester.. Digests double-stranded RNA. Involved in the processing of primary rRNA transcript to yield the immediate precursors to the large and small rRNAs (23S and 16S). Processes some mRNAs, and tRNAs when they are encoded in the rRNA operon. Processes pre-crRNA and tracrRNA of type II CRISPR loci if present in the organism. This chain is Ribonuclease 3, found in Clostridium botulinum (strain Alaska E43 / Type E3).